We begin with the raw amino-acid sequence, 845 residues long: Beta-glucosidase (845 aa).

Residue asparagine 66 is glycosylated (N-linked (GlcNAc...) asparagine). Aspartate 225 is an active-site residue. 3 N-linked (GlcNAc...) asparagine glycosylation sites follow: asparagine 304, asparagine 438, and asparagine 621. One can recognise a PA14 domain in the interval 408–568 (AENAGLIAKF…DDDEEIRNAA (161 aa)).

This sequence belongs to the glycosyl hydrolase 3 family. As to quaternary structure, homotetramer.

The enzyme catalyses Hydrolysis of terminal, non-reducing beta-D-glucosyl residues with release of beta-D-glucose.. Its pathway is glycan metabolism; cellulose degradation. The polypeptide is Beta-glucosidase (Kluyveromyces marxianus (Yeast)).